Consider the following 196-residue polypeptide: Protein LSM12 homolog A (196 aa).

In terms of domain architecture, Sm spans 3–73 (APGPGEYFSV…VSEVDIINDR (71 aa)). Residues 81 to 175 (ASLNISKLAN…IVEKHFRDVE (95 aa)) form the AD domain. A disordered region spans residues 174–196 (VESQKTMQRSQAQQTQKDSSLSS). The span at 177–196 (QKTMQRSQAQQTQKDSSLSS) shows a compositional bias: polar residues.

The protein belongs to the LSM12 family.

This is Protein LSM12 homolog A (lsm12a) from Danio rerio (Zebrafish).